The following is a 2282-amino-acid chain: Acetyl-CoA carboxylase (2282 aa).

Residues Asn16–Ser515 form the Biotin carboxylation domain. In terms of domain architecture, ATP-grasp spans Tyr170–Met360. Ala196 to Leu253 provides a ligand contact to ATP. The Mn(2+) site is built by Glu319, Glu331, and Asn333. Arg335 is a catalytic residue. Residues Phe646–Glu720 enclose the Biotinyl-binding domain. Lys687 is modified (N6-biotinyllysine). The span at Gly1109–Gly1129 shows a compositional bias: low complexity. A disordered region spans residues Gly1109–Pro1141. The CoA carboxyltransferase N-terminal domain occupies Pro1495–Ser1851. A carboxyltransferase region spans residues Pro1495–Lys2178. The CoA site is built by Arg1761, Lys2068, and Arg2070. In terms of domain architecture, CoA carboxyltransferase C-terminal spans Pro1852–Lys2178.

The cofactor is biotin. It depends on Mn(2+) as a cofactor.

The protein resides in the cytoplasm. The enzyme catalyses hydrogencarbonate + acetyl-CoA + ATP = malonyl-CoA + ADP + phosphate + H(+). It catalyses the reaction N(6)-biotinyl-L-lysyl-[protein] + hydrogencarbonate + ATP = N(6)-carboxybiotinyl-L-lysyl-[protein] + ADP + phosphate + H(+). It functions in the pathway lipid metabolism; malonyl-CoA biosynthesis; malonyl-CoA from acetyl-CoA: step 1/1. Its function is as follows. Catalyzes the rate-limiting reaction in the biogenesis of long-chain fatty acids. Carries out three functions: biotin carboxyl carrier protein, biotin carboxylase and carboxyltransferase. This is Acetyl-CoA carboxylase (accA) from Dictyostelium discoideum (Social amoeba).